Consider the following 206-residue polypeptide: Protein GrpE (206 aa).

Basic and acidic residues predominate over residues methionine 1–valine 17. A disordered region spans residues methionine 1–glutamate 20.

This sequence belongs to the GrpE family. As to quaternary structure, homodimer.

It is found in the cytoplasm. In terms of biological role, participates actively in the response to hyperosmotic and heat shock by preventing the aggregation of stress-denatured proteins, in association with DnaK and GrpE. It is the nucleotide exchange factor for DnaK and may function as a thermosensor. Unfolded proteins bind initially to DnaJ; upon interaction with the DnaJ-bound protein, DnaK hydrolyzes its bound ATP, resulting in the formation of a stable complex. GrpE releases ADP from DnaK; ATP binding to DnaK triggers the release of the substrate protein, thus completing the reaction cycle. Several rounds of ATP-dependent interactions between DnaJ, DnaK and GrpE are required for fully efficient folding. The protein is Protein GrpE of Shewanella oneidensis (strain ATCC 700550 / JCM 31522 / CIP 106686 / LMG 19005 / NCIMB 14063 / MR-1).